The sequence spans 366 residues: Chorismate synthase (366 aa).

Arg-48 provides a ligand contact to NADP(+). Residues 131–133 (RAS), 243–244 (NA), Gly-288, 303–307 (KPTSS), and Arg-329 each bind FMN.

It belongs to the chorismate synthase family. As to quaternary structure, homotetramer. Requires FMNH2 as cofactor.

It carries out the reaction 5-O-(1-carboxyvinyl)-3-phosphoshikimate = chorismate + phosphate. It functions in the pathway metabolic intermediate biosynthesis; chorismate biosynthesis; chorismate from D-erythrose 4-phosphate and phosphoenolpyruvate: step 7/7. Catalyzes the anti-1,4-elimination of the C-3 phosphate and the C-6 proR hydrogen from 5-enolpyruvylshikimate-3-phosphate (EPSP) to yield chorismate, which is the branch point compound that serves as the starting substrate for the three terminal pathways of aromatic amino acid biosynthesis. This reaction introduces a second double bond into the aromatic ring system. The chain is Chorismate synthase from Bartonella henselae (strain ATCC 49882 / DSM 28221 / CCUG 30454 / Houston 1) (Rochalimaea henselae).